The primary structure comprises 151 residues: Probable cGMP 3',5'-cyclic phosphodiesterase subunit delta (151 aa).

This sequence belongs to the PDE6D/unc-119 family. As to quaternary structure, interacts with Pde6.

The protein localises to the nucleus. Its subcellular location is the cytoplasm. In Drosophila persimilis (Fruit fly), this protein is Probable cGMP 3',5'-cyclic phosphodiesterase subunit delta.